A 291-amino-acid chain; its full sequence is Undecaprenyl-diphosphatase (291 aa).

8 helical membrane-spanning segments follow: residues 1-21 (MFII…LTEF), 48-68 (SAFT…AWVF), 102-122 (LHVL…DDFI), 126-146 (LFSV…MIIA), 162-182 (ISYF…WPGF), 203-223 (SDFT…LSLL), 231-251 (IADI…GLIA), and 267-287 (FAIY…GFGI).

This sequence belongs to the UppP family.

The protein resides in the cell membrane. It carries out the reaction di-trans,octa-cis-undecaprenyl diphosphate + H2O = di-trans,octa-cis-undecaprenyl phosphate + phosphate + H(+). Functionally, catalyzes the dephosphorylation of undecaprenyl diphosphate (UPP). Confers resistance to bacitracin. In Staphylococcus aureus (strain USA300), this protein is Undecaprenyl-diphosphatase.